A 384-amino-acid chain; its full sequence is S-adenosylmethionine synthase (384 aa).

Residue H15 coordinates ATP. D17 contacts Mg(2+). E43 lines the K(+) pocket. 2 residues coordinate L-methionine: E56 and Q99. The segment at 99-109 (QSPDINQGVDR) is flexible loop. ATP-binding positions include 164–166 (DAK), 230–231 (RF), D239, 245–246 (RK), A262, and K266. D239 serves as a coordination point for L-methionine. K270 is an L-methionine binding site.

This sequence belongs to the AdoMet synthase family. As to quaternary structure, homotetramer; dimer of dimers. Requires Mg(2+) as cofactor. K(+) serves as cofactor.

It is found in the cytoplasm. The enzyme catalyses L-methionine + ATP + H2O = S-adenosyl-L-methionine + phosphate + diphosphate. The protein operates within amino-acid biosynthesis; S-adenosyl-L-methionine biosynthesis; S-adenosyl-L-methionine from L-methionine: step 1/1. Catalyzes the formation of S-adenosylmethionine (AdoMet) from methionine and ATP. The overall synthetic reaction is composed of two sequential steps, AdoMet formation and the subsequent tripolyphosphate hydrolysis which occurs prior to release of AdoMet from the enzyme. The chain is S-adenosylmethionine synthase from Salmonella arizonae (strain ATCC BAA-731 / CDC346-86 / RSK2980).